The chain runs to 177 residues: FCS-Like Zinc finger 1 (177 aa).

The segment covering 22–46 has biased composition (low complexity); sequence SLSEMEAGFSGNNNNSNNHGNPQNG. 2 disordered regions span residues 22–49 and 134–177; these read SLSEMEAGFSGNNNNSNNHGNPQNGVVS and ERDE…VAAA. The FLZ-type zinc finger occupies 96-140; that stretch reads HFLDSCFLCKKPLGDNRDIYMYRGDTPFCSEECRQEQIERDEAKE. Composition is skewed to basic and acidic residues over residues 134–143 and 154–168; these read ERDEAKEKKQ and RRKEQSSPTRSRDYA.

This sequence belongs to the FLZ family. As to quaternary structure, interacts with KIN10 and KIN11 via its FLZ-type zinc finger domain. Interacts with KINB1, KINB2 and KINB3 via its N-terminal part. Interacts with DSP3 and BBX21 via its FLZ-type zinc finger domain. Forms heterodimer with FLZ7 and FLZ15 in vitro.

Its subcellular location is the nucleus. The protein resides in the cytoplasm. May act as an adapter to facilitate the interaction of SnRK1 complex with effector proteins, conferring tissue- and stimulus-type specific differences in the SnRK1 regulation pathway. This chain is FCS-Like Zinc finger 1, found in Arabidopsis thaliana (Mouse-ear cress).